The following is a 490-amino-acid chain: Betaine aldehyde dehydrogenase (490 aa).

D93 contributes to the K(+) binding site. G150–W152 serves as a coordination point for NAD(+). Catalysis depends on K162, which acts as the Charge relay system. Position 176–179 (K176–E179) interacts with NAD(+). Residue V180 coordinates K(+). G230–S233 provides a ligand contact to NAD(+). L246 provides a ligand contact to K(+). E252 (proton acceptor) is an active-site residue. Residues G254, C286, and E387 each contribute to the NAD(+) site. C286 functions as the Nucleophile in the catalytic mechanism. C286 carries the post-translational modification Cysteine sulfenic acid (-SOH). Positions 457 and 460 each coordinate K(+). E464 functions as the Charge relay system in the catalytic mechanism.

This sequence belongs to the aldehyde dehydrogenase family. Dimer of dimers. Requires K(+) as cofactor.

The enzyme catalyses betaine aldehyde + NAD(+) + H2O = glycine betaine + NADH + 2 H(+). Its pathway is amine and polyamine biosynthesis; betaine biosynthesis via choline pathway; betaine from betaine aldehyde: step 1/1. In terms of biological role, involved in the biosynthesis of the osmoprotectant glycine betaine. Catalyzes the irreversible oxidation of betaine aldehyde to the corresponding acid. This chain is Betaine aldehyde dehydrogenase, found in Pectobacterium atrosepticum (strain SCRI 1043 / ATCC BAA-672) (Erwinia carotovora subsp. atroseptica).